The chain runs to 264 residues: Thiazole synthase (264 aa).

Lys106 (schiff-base intermediate with DXP) is an active-site residue. 1-deoxy-D-xylulose 5-phosphate is bound by residues Gly167, 193–194 (AG), and 215–216 (NT).

It belongs to the ThiG family. In terms of assembly, homotetramer. Forms heterodimers with either ThiH or ThiS.

It is found in the cytoplasm. The enzyme catalyses [ThiS sulfur-carrier protein]-C-terminal-Gly-aminoethanethioate + 2-iminoacetate + 1-deoxy-D-xylulose 5-phosphate = [ThiS sulfur-carrier protein]-C-terminal Gly-Gly + 2-[(2R,5Z)-2-carboxy-4-methylthiazol-5(2H)-ylidene]ethyl phosphate + 2 H2O + H(+). It participates in cofactor biosynthesis; thiamine diphosphate biosynthesis. Its function is as follows. Catalyzes the rearrangement of 1-deoxy-D-xylulose 5-phosphate (DXP) to produce the thiazole phosphate moiety of thiamine. Sulfur is provided by the thiocarboxylate moiety of the carrier protein ThiS. In vitro, sulfur can be provided by H(2)S. In Xanthomonas campestris pv. campestris (strain 8004), this protein is Thiazole synthase.